We begin with the raw amino-acid sequence, 143 residues long: Transcriptional regulator SlyA (143 aa).

Positions 2–135 (ESTLGSDLSR…LTNLVERLEQ (134 aa)) constitute an HTH marR-type domain. Positions 49–72 (QIQLAKAIGIEQPSLVRTLDQLED) form a DNA-binding region, H-T-H motif.

This sequence belongs to the SlyA family. Homodimer.

Its function is as follows. Transcription regulator that can specifically activate or repress expression of target genes. In Edwardsiella tarda, this protein is Transcriptional regulator SlyA.